Consider the following 157-residue polypeptide: Putative gamma-glutamylcyclotransferase CG2811 (157 aa).

14–17 (YGTL) is a substrate binding site. Glutamate 89 (proton acceptor) is an active-site residue.

This sequence belongs to the gamma-glutamylcyclotransferase family.

Putative gamma-glutamylcyclotransferase. The protein is Putative gamma-glutamylcyclotransferase CG2811 of Drosophila melanogaster (Fruit fly).